A 338-amino-acid chain; its full sequence is Rho GTPase-activating protein gacA (338 aa).

In terms of domain architecture, Rho-GAP spans 149 to 327 (NTLEHVEDEG…NVLSHKVAVH (179 aa)).

The protein localises to the cytoplasm. Rho GTPase-activating protein involved in the signal transduction pathway. The polypeptide is Rho GTPase-activating protein gacA (gacA) (Dictyostelium discoideum (Social amoeba)).